We begin with the raw amino-acid sequence, 219 residues long: Probable nicotinate-nucleotide adenylyltransferase (219 aa).

This sequence belongs to the NadD family.

The catalysed reaction is nicotinate beta-D-ribonucleotide + ATP + H(+) = deamido-NAD(+) + diphosphate. Its pathway is cofactor biosynthesis; NAD(+) biosynthesis; deamido-NAD(+) from nicotinate D-ribonucleotide: step 1/1. In terms of biological role, catalyzes the reversible adenylation of nicotinate mononucleotide (NaMN) to nicotinic acid adenine dinucleotide (NaAD). The protein is Probable nicotinate-nucleotide adenylyltransferase of Erythrobacter litoralis (strain HTCC2594).